The sequence spans 399 residues: S-adenosylmethionine synthase (399 aa).

H17 contributes to the ATP binding site. D19 serves as a coordination point for Mg(2+). E45 serves as a coordination point for K(+). Residues E58 and Q101 each contribute to the L-methionine site. The interval 101–111 is flexible loop; the sequence is QSPDIAQGVDE. Residues 177 to 179, 244 to 245, D253, 259 to 260, A276, and K280 contribute to the ATP site; these read DAK, RF, and RK. D253 is an L-methionine binding site. An L-methionine-binding site is contributed by K284.

Belongs to the AdoMet synthase family. Homotetramer; dimer of dimers. Mg(2+) serves as cofactor. K(+) is required as a cofactor.

It is found in the cytoplasm. It catalyses the reaction L-methionine + ATP + H2O = S-adenosyl-L-methionine + phosphate + diphosphate. The protein operates within amino-acid biosynthesis; S-adenosyl-L-methionine biosynthesis; S-adenosyl-L-methionine from L-methionine: step 1/1. Catalyzes the formation of S-adenosylmethionine (AdoMet) from methionine and ATP. The overall synthetic reaction is composed of two sequential steps, AdoMet formation and the subsequent tripolyphosphate hydrolysis which occurs prior to release of AdoMet from the enzyme. This chain is S-adenosylmethionine synthase, found in Listeria monocytogenes serotype 4b (strain CLIP80459).